We begin with the raw amino-acid sequence, 143 residues long: Large ribosomal subunit protein uL11 (143 aa).

This sequence belongs to the universal ribosomal protein uL11 family. As to quaternary structure, part of the ribosomal stalk of the 50S ribosomal subunit. Interacts with L10 and the large rRNA to form the base of the stalk. L10 forms an elongated spine to which L12 dimers bind in a sequential fashion forming a multimeric L10(L12)X complex. Post-translationally, one or more lysine residues are methylated.

In terms of biological role, forms part of the ribosomal stalk which helps the ribosome interact with GTP-bound translation factors. The protein is Large ribosomal subunit protein uL11 of Halorhodospira halophila (strain DSM 244 / SL1) (Ectothiorhodospira halophila (strain DSM 244 / SL1)).